Reading from the N-terminus, the 130-residue chain is Small ribosomal subunit protein uS8 (130 aa).

The protein belongs to the universal ribosomal protein uS8 family. In terms of assembly, part of the 30S ribosomal subunit. Contacts proteins S5 and S12.

One of the primary rRNA binding proteins, it binds directly to 16S rRNA central domain where it helps coordinate assembly of the platform of the 30S subunit. This is Small ribosomal subunit protein uS8 from Haemophilus influenzae (strain 86-028NP).